The primary structure comprises 226 residues: UPF0758 protein Daro_3142 (226 aa).

Positions 103-226 (SFTSPGKVRD…PLSFAERGLL (124 aa)) constitute an MPN domain. Zn(2+)-binding residues include histidine 174, histidine 176, and aspartate 187. Positions 174 to 187 (HNHPSGIAEPSRAD) match the JAMM motif motif.

Belongs to the UPF0758 family.

The polypeptide is UPF0758 protein Daro_3142 (Dechloromonas aromatica (strain RCB)).